A 463-amino-acid polypeptide reads, in one-letter code: ATP-dependent protease ATPase subunit HslU (463 aa).

Residues Ile-19, 61–66 (GVGKTE), Asp-277, Glu-341, and Arg-413 contribute to the ATP site.

The protein belongs to the ClpX chaperone family. HslU subfamily. A double ring-shaped homohexamer of HslV is capped on each side by a ring-shaped HslU homohexamer. The assembly of the HslU/HslV complex is dependent on binding of ATP.

It is found in the cytoplasm. Functionally, ATPase subunit of a proteasome-like degradation complex; this subunit has chaperone activity. The binding of ATP and its subsequent hydrolysis by HslU are essential for unfolding of protein substrates subsequently hydrolyzed by HslV. HslU recognizes the N-terminal part of its protein substrates and unfolds these before they are guided to HslV for hydrolysis. The protein is ATP-dependent protease ATPase subunit HslU of Bacillus cereus (strain B4264).